The primary structure comprises 284 residues: Aldo-keto reductase MAV_3816 (284 aa).

Y59 serves as the catalytic Proton donor. 7 residues coordinate NADPH: L199, I237, R239, S240, A241, S248, and R275.

This sequence belongs to the aldo/keto reductase family.

This chain is Aldo-keto reductase MAV_3816, found in Mycobacterium avium (strain 104).